The chain runs to 1286 residues: Autotransporter adhesin AIDA-I (1286 aa).

A signal peptide spans 1 to 49 (MNKAYSIIWSHSRQAWIVASELARGHGFVLAKNTLLVLAVVSTIGNAFA). 3 O-alpha-linked (glycero-D-manno-heptose) serine glycosylation sites follow: Ser-102, Ser-111, and Ser-116. Thr-154 carries O-alpha-linked (glycero-D-manno-heptose) threonine glycosylation. O-alpha-linked (glycero-D-manno-heptose) serine glycans are attached at residues Ser-242, Ser-252, Ser-334, Ser-391, Ser-409, Ser-539, Ser-545, Ser-558, Ser-569, Ser-576, Ser-577, and Ser-582. Positions 998–1286 (TQPESASVWM…SGALGIKYSF (289 aa)) constitute an Autotransporter domain. The beta stranded transmembrane segment at 1006–1012 (WMKITGG) threads the bilayer. At 1013 to 1029 (ISSGKLNDGQNKTTTNQ) the chain is on the extracellular side. Residues 1030–1040 (FINQLGGDIYK) traverse the membrane as a beta stranded segment. Topologically, residues 1041–1047 (FHAEQLG) are periplasmic. The beta stranded transmembrane segment at 1048 to 1058 (DFTLGIMGGYA) threads the bilayer. The Extracellular portion of the chain corresponds to 1059-1079 (NAKGKTINYTSNKAARNTLDG). A beta stranded membrane pass occupies residues 1080-1087 (YSVGVYGT). The Periplasmic portion of the chain corresponds to 1088 to 1097 (WYQNGENATG). A beta stranded membrane pass occupies residues 1098–1108 (LFAETWMQYNW). The Extracellular segment spans residues 1109–1126 (FNASVKGDGLEEEKYNLN). The chain crosses the membrane as a beta stranded span at residues 1127–1138 (GLTASAGGGYNL). At 1139 to 1152 (NVHTWTSPEGITGE) the chain is on the periplasmic side. Residues 1153–1164 (FWLQPHLQAVWM) form a beta stranded membrane-spanning segment. Residues 1165–1186 (GVTPDTHQEDNGTVVQGAGKNN) lie on the Extracellular side of the membrane. A beta stranded membrane pass occupies residues 1187 to 1198 (IQTKAGIRASWK). At 1199–1210 (VKSTLDKDTGRR) the chain is on the periplasmic side. The beta stranded transmembrane segment at 1211–1221 (FRPYIEANWIH) threads the bilayer. At 1222-1242 (NTHEFGVKMSDDSQLLSGSRN) the chain is on the extracellular side. The beta stranded transmembrane segment at 1243-1253 (QGEIKTGIEGV) threads the bilayer. Over 1254-1259 (ITQNLS) the chain is Periplasmic. A beta stranded membrane pass occupies residues 1260–1267 (VNGGVAYQ). Residues 1268–1275 (AGGHGSNA) lie on the Extracellular side of the membrane. A beta stranded transmembrane segment spans residues 1276–1284 (ISGALGIKY). The Periplasmic portion of the chain corresponds to 1285-1286 (SF).

As to quaternary structure, intercellular AIDA-AIDA interaction is responsible for bacterial autoaggregation. AIDA can also interact with antigen 43 (Ag43), and the resultant intercellular AIDA-Ag43 interaction causes cell aggregation. Glycosylated on serine residues by AHH and AAH2 in the cytoplasm. Glycosylated with an average of 19 heptose residues. Glycosylated with either ADP-L, D-heptose or ADP-D, D-heptose. Glycosylation is required for protein folding/stabilization and resistance to protease-mediated degradation. Glycosylation is required for bacteria adhesion to mammalian cells. Glycosylation is dispensable for cell outer membrane localization. Glycosylation is dispensable for AIDA-mediated cell-cell aggregation and induction of biofilm formation. Glycosylation is dispensable for interaction with Ag43.

The protein resides in the periplasm. Its subcellular location is the secreted. It localises to the cell surface. It is found in the cell outer membrane. Functionally, potent bacterial adhesin that mediates bacterial attachment to a broad variety of human and other mammalian cells. Has additional virulence properties, as it is capable of mediating bacterial autoaggregation via intercellular self-recognition and it is a highly efficient initiator of biofilm formation. This chain is Autotransporter adhesin AIDA-I (aidA), found in Escherichia coli.